A 238-amino-acid polypeptide reads, in one-letter code: Sugar fermentation stimulation protein homolog (238 aa).

It belongs to the SfsA family.

The chain is Sugar fermentation stimulation protein homolog from Brucella abortus (strain S19).